The following is a 188-amino-acid chain: ATP synthase subunit b (188 aa).

A helical membrane pass occupies residues 24–44; sequence LPASYDIVWSLVVFIIVLILF.

It belongs to the ATPase B chain family. F-type ATPases have 2 components, F(1) - the catalytic core - and F(0) - the membrane proton channel. F(1) has five subunits: alpha(3), beta(3), gamma(1), delta(1), epsilon(1). F(0) has three main subunits: a(1), b(2) and c(10-14). The alpha and beta chains form an alternating ring which encloses part of the gamma chain. F(1) is attached to F(0) by a central stalk formed by the gamma and epsilon chains, while a peripheral stalk is formed by the delta and b chains.

It is found in the cell membrane. F(1)F(0) ATP synthase produces ATP from ADP in the presence of a proton or sodium gradient. F-type ATPases consist of two structural domains, F(1) containing the extramembraneous catalytic core and F(0) containing the membrane proton channel, linked together by a central stalk and a peripheral stalk. During catalysis, ATP synthesis in the catalytic domain of F(1) is coupled via a rotary mechanism of the central stalk subunits to proton translocation. Its function is as follows. Component of the F(0) channel, it forms part of the peripheral stalk, linking F(1) to F(0). This is ATP synthase subunit b from Corynebacterium diphtheriae (strain ATCC 700971 / NCTC 13129 / Biotype gravis).